We begin with the raw amino-acid sequence, 247 residues long: Peroxisomal membrane protein 11A (247 aa).

At 1–83 the chain is on the cytoplasmic side; the sequence is MDAFTRFTNQ…SIHATDLVPR (83 aa). Residues 84–105 form a helical membrane-spanning segment; the sequence is LCLTLANLNRVIYFICDTILWV. At 106 to 219 the chain is on the lumenal side; the sequence is RSVGLTSGIN…DQLGIYKSNP (114 aa). The helical transmembrane segment at 220–239 threads the bilayer; that stretch reads GIIGLGGLVSSIAGMITVAY. Positions 220–239 are required for homodimerization, interaction with PEX11G, and peroxisomal localization; sequence GIIGLGGLVSSIAGMITVAY. Residues 240–247 are Cytoplasmic-facing; sequence PQMKLKTR.

This sequence belongs to the peroxin-11 family. In terms of assembly, homodimer. Heterodimer with PEX11G. Probably interacts with COPB2 and COPA. Interacts with PEX19. Interacts with FIS1. Post-translationally, seems not to be N-glycosylated.

The protein resides in the peroxisome membrane. In terms of biological role, may be involved in peroxisomal proliferation and may regulate peroxisomes division. May mediate binding of coatomer proteins to the peroxisomal membrane. Promotes membrane protrusion and elongation on the peroxisomal surface. The polypeptide is Peroxisomal membrane protein 11A (PEX11A) (Homo sapiens (Human)).